The primary structure comprises 545 residues: CTP synthase (545 aa).

Positions 1–266 (MATNYIFVTG…DDFVCERFRL (266 aa)) are amidoligase domain. S14 provides a ligand contact to CTP. UTP is bound at residue S14. ATP contacts are provided by residues 15 to 20 (SLGKGI) and D72. Positions 72 and 140 each coordinate Mg(2+). CTP contacts are provided by residues 147–149 (DIE), 187–192 (KTKPTQ), and K223. UTP contacts are provided by residues 187–192 (KTKPTQ) and K223. An ATP-binding site is contributed by 239 to 241 (KDV). The Glutamine amidotransferase type-1 domain maps to 291–542 (TIGMVGKYTE…VKAAYENHKK (252 aa)). G352 is a binding site for L-glutamine. The active-site Nucleophile; for glutamine hydrolysis is the C379. L-glutamine-binding positions include 380–383 (LGMQ), E403, and R470. Residues H515 and E517 contribute to the active site.

It belongs to the CTP synthase family. Homotetramer.

The enzyme catalyses UTP + L-glutamine + ATP + H2O = CTP + L-glutamate + ADP + phosphate + 2 H(+). The catalysed reaction is L-glutamine + H2O = L-glutamate + NH4(+). It catalyses the reaction UTP + NH4(+) + ATP = CTP + ADP + phosphate + 2 H(+). The protein operates within pyrimidine metabolism; CTP biosynthesis via de novo pathway; CTP from UDP: step 2/2. With respect to regulation, allosterically activated by GTP, when glutamine is the substrate; GTP has no effect on the reaction when ammonia is the substrate. The allosteric effector GTP functions by stabilizing the protein conformation that binds the tetrahedral intermediate(s) formed during glutamine hydrolysis. Inhibited by the product CTP, via allosteric rather than competitive inhibition. In terms of biological role, catalyzes the ATP-dependent amination of UTP to CTP with either L-glutamine or ammonia as the source of nitrogen. Regulates intracellular CTP levels through interactions with the four ribonucleotide triphosphates. In Haemophilus influenzae (strain PittEE), this protein is CTP synthase.